A 282-amino-acid polypeptide reads, in one-letter code: Probable ribosomal RNA small subunit methyltransferase A (282 aa).

S-adenosyl-L-methionine is bound by residues His24, Leu26, Gly51, Glu72, Asp100, and Asn115.

It belongs to the class I-like SAM-binding methyltransferase superfamily. rRNA adenine N(6)-methyltransferase family. RsmA subfamily.

The protein resides in the cytoplasm. Specifically dimethylates two adjacent adenosines in the loop of a conserved hairpin near the 3'-end of 16S rRNA in the 30S particle. May play a critical role in biogenesis of 30S subunits. This chain is Probable ribosomal RNA small subunit methyltransferase A, found in Halobacterium salinarum (strain ATCC 29341 / DSM 671 / R1).